A 243-amino-acid polypeptide reads, in one-letter code: Pyridoxine 5'-phosphate synthase (243 aa).

Position 9 (Asn9) interacts with 3-amino-2-oxopropyl phosphate. Residue 11 to 12 (DH) participates in 1-deoxy-D-xylulose 5-phosphate binding. A 3-amino-2-oxopropyl phosphate-binding site is contributed by Arg20. His45 (proton acceptor) is an active-site residue. 1-deoxy-D-xylulose 5-phosphate is bound by residues Arg47 and His52. The Proton acceptor role is filled by Glu72. Thr102 contacts 1-deoxy-D-xylulose 5-phosphate. The active-site Proton donor is His193. 3-amino-2-oxopropyl phosphate contacts are provided by residues Gly194 and 215–216 (GH).

This sequence belongs to the PNP synthase family. Homooctamer; tetramer of dimers.

Its subcellular location is the cytoplasm. The catalysed reaction is 3-amino-2-oxopropyl phosphate + 1-deoxy-D-xylulose 5-phosphate = pyridoxine 5'-phosphate + phosphate + 2 H2O + H(+). The protein operates within cofactor biosynthesis; pyridoxine 5'-phosphate biosynthesis; pyridoxine 5'-phosphate from D-erythrose 4-phosphate: step 5/5. Functionally, catalyzes the complicated ring closure reaction between the two acyclic compounds 1-deoxy-D-xylulose-5-phosphate (DXP) and 3-amino-2-oxopropyl phosphate (1-amino-acetone-3-phosphate or AAP) to form pyridoxine 5'-phosphate (PNP) and inorganic phosphate. The chain is Pyridoxine 5'-phosphate synthase from Yersinia pestis.